Here is a 271-residue protein sequence, read N- to C-terminus: Hachiman protein HamA (271 aa).

Its function is as follows. Component of antiviral defense system Hachiman, composed of HamA and HamB. Expression of Hachiman in B.subtilis (strain BEST7003) confers resistance to phages phi105, phi29, phi3T, rho14, SBSphiJ, SpBeta and SPR. This Bacillus cereus protein is Hachiman protein HamA.